A 382-amino-acid chain; its full sequence is 4-hydroxy-3-methylbut-2-en-1-yl diphosphate synthase (flavodoxin) (382 aa).

Residues Cys-290, Cys-293, Cys-327, and Glu-334 each coordinate [4Fe-4S] cluster.

This sequence belongs to the IspG family. It depends on [4Fe-4S] cluster as a cofactor.

It carries out the reaction (2E)-4-hydroxy-3-methylbut-2-enyl diphosphate + oxidized [flavodoxin] + H2O + 2 H(+) = 2-C-methyl-D-erythritol 2,4-cyclic diphosphate + reduced [flavodoxin]. It functions in the pathway isoprenoid biosynthesis; isopentenyl diphosphate biosynthesis via DXP pathway; isopentenyl diphosphate from 1-deoxy-D-xylulose 5-phosphate: step 5/6. In terms of biological role, converts 2C-methyl-D-erythritol 2,4-cyclodiphosphate (ME-2,4cPP) into 1-hydroxy-2-methyl-2-(E)-butenyl 4-diphosphate. This chain is 4-hydroxy-3-methylbut-2-en-1-yl diphosphate synthase (flavodoxin), found in Rhodopirellula baltica (strain DSM 10527 / NCIMB 13988 / SH1).